Reading from the N-terminus, the 426-residue chain is Tetracenomycin polyketide synthase ketoacyl synthase alpha subunit (426 aa).

The region spanning 6-420 is the Ketosynthase family 3 (KS3) domain; the sequence is EKRVVITGIG…GFQSAAVLAR (415 aa). Residues cysteine 173, histidine 313, and histidine 350 each act as for beta-ketoacyl synthase activity in the active site.

It belongs to the thiolase-like superfamily. Beta-ketoacyl-ACP synthases family. The tetracenomycin polyketide synthase (TCM PKS) is composed of a ketosynthase complex (TcmKL), an acyl carrier protein (TcmM), a cyclase (TcmN) and a probable second cyclase (TcmJ). TcmK and TcmL form a heterodimeric complex.

It carries out the reaction 10 malonyl-CoA + 8 H(+) = tetracenomycin F2 + 10 CO2 + 10 CoA + 2 H2O. The protein operates within antibiotic biosynthesis; tetracenomycin C biosynthesis. Functionally, involved in the biosynthesis of tetracenomycin C (TCM C). Part of a type II polyketide synthase (PKS) that catalyzes the synthesis of tetracenomycin F2 (TCM F2), a precursor of TCM C, from malonyl-CoA. TcmK and TcmL form a heterodimeric alpha-beta complex that catalyzes the condensation reactions between the growing acyl-enzyme chain and the malonyl-CoA extender units. This is Tetracenomycin polyketide synthase ketoacyl synthase alpha subunit from Streptomyces glaucescens.